The chain runs to 302 residues: Sulfate adenylyltransferase subunit 2 (302 aa).

Belongs to the PAPS reductase family. CysD subfamily. As to quaternary structure, heterodimer composed of CysD, the smaller subunit, and CysN.

The enzyme catalyses sulfate + ATP + H(+) = adenosine 5'-phosphosulfate + diphosphate. It functions in the pathway sulfur metabolism; hydrogen sulfide biosynthesis; sulfite from sulfate: step 1/3. With CysN forms the ATP sulfurylase (ATPS) that catalyzes the adenylation of sulfate producing adenosine 5'-phosphosulfate (APS) and diphosphate, the first enzymatic step in sulfur assimilation pathway. APS synthesis involves the formation of a high-energy phosphoric-sulfuric acid anhydride bond driven by GTP hydrolysis by CysN coupled to ATP hydrolysis by CysD. In Baumannia cicadellinicola subsp. Homalodisca coagulata, this protein is Sulfate adenylyltransferase subunit 2.